The chain runs to 601 residues: Putative purine permease C1399.01c (601 aa).

12 helical membrane passes run 64 to 84 (VPVL…VGGV), 102 to 122 (TNYL…IQIA), 131 to 151 (YYIG…VSVA), 179 to 199 (YGAF…MSFI), 207 to 227 (LFPP…LISS), 264 to 284 (GWGS…IIII), 294 to 314 (TTSV…TGYW), 337 to 357 (IYGP…MEAI), 424 to 444 (FFCA…AVFV), 450 to 470 (VLGG…IAII), 481 to 501 (FILT…DWFT), and 522 to 542 (LVME…NLIL).

Belongs to the nucleobase:cation symporter-2 (NCS2) (TC 2.A.40) family.

Its subcellular location is the vacuole membrane. The chain is Putative purine permease C1399.01c from Schizosaccharomyces pombe (strain 972 / ATCC 24843) (Fission yeast).